Here is a 1115-residue protein sequence, read N- to C-terminus: Lateral signaling target protein 2 homolog (1115 aa).

4 disordered regions span residues 308-488 (PLGS…DSDS), 545-586 (SEDD…PSTS), 600-742 (RLPS…SLSD), and 879-1027 (VQSS…PDGK). A compositionally biased stretch (low complexity) spans 322 to 361 (NNSSSTTNTSNNNNNNTNNNNSSSGSDCTNNDKTGTTTNT). Positions 363 to 373 (KPVERLVDHRN) are enriched in basic and acidic residues. Low complexity-rich tracts occupy residues 374 to 417 (NNTT…TPTA) and 425 to 444 (PSHS…NSPA). Residues 449-488 (YDDDDEDDDDDDVHADVEEDEDESGILDSDEHDLNDDSDS) show a composition bias toward acidic residues. 2 stretches are compositionally biased toward low complexity: residues 558–577 (QQQQ…QQQQ) and 600–614 (RLPS…SSNN). Phosphoserine is present on residues Ser-603 and Ser-604. A compositionally biased stretch (polar residues) spans 615–628 (QQMTIKSPSEQTTT). A compositionally biased stretch (basic residues) spans 632-655 (SNRHRHHSHHHHHHHHSHHHHHHQ). The span at 658-676 (AAVAVAAAQDEQHNNNQPH) shows a compositional bias: low complexity. The segment covering 677 to 706 (SHSHSSSHHHHHNHQSHSHPHRANRSTRKR) has biased composition (basic residues). 3 stretches are compositionally biased toward low complexity: residues 714-726 (TITT…GGEQ), 733-742 (DSSTASSLSD), and 881-901 (SSNS…AARS). Ser-908 is subject to Phosphoserine. Composition is skewed to low complexity over residues 921-975 (QQQQ…SPVS) and 988-1020 (TTTT…MSPP). The FYVE-type zinc-finger motif lies at 1025 to 1085 (DGKAPRCMSC…VCRECFMREV (61 aa)). The Zn(2+) site is built by Cys-1031, Cys-1034, Cys-1047, Cys-1050, Cys-1055, Cys-1058, Cys-1077, and Cys-1080. A disordered region spans residues 1088-1115 (SHSHGQSQSQIHSPTQQAGGRPQAASAS). Residues 1090-1100 (SHGQSQSQIHS) show a composition bias toward low complexity.

Belongs to the lst-2 family.

Its function is as follows. Negative regulator of epidermal growth factor receptor (EGFR) signaling. This chain is Lateral signaling target protein 2 homolog, found in Drosophila grimshawi (Hawaiian fruit fly).